The primary structure comprises 815 residues: Neuronal PAS domain-containing protein 2 (815 aa).

The segment covering 1-10 (MDEDEKDRAK) has biased composition (basic and acidic residues). Positions 1 to 21 (MDEDEKDRAKRASRNKSEKKR) are disordered. The sufficient for heterodimer formation with BMAL1, E-box binding and for the effect of NADPH stretch occupies residues 1–61 (MDEDEKDRAK…VIGFLQKHNE (61 aa)). Positions 9–59 (AKRASRNKSEKKRRDQFNVLIKELSSMLPGNTRKMDKTTVLEKVIGFLQKH) constitute a bHLH domain. The PAS 1 domain occupies 82 to 152 (NEEFTQLMLE…KMLSSCMLMT (71 aa)). Positions 119 and 171 each coordinate heme b. The region spanning 237-307 (FLKEMCIVEE…RCHEHLMQFG (71 aa)) is the PAS 2 domain. One can recognise a PAC domain in the interval 311–354 (SCCYRFLTKGQQWIWLQTHYYITYHQWNSKPEFIVCTHMVVSYA). Positions 405–420 (RTPSVSSRSSPKSSHT) are enriched in low complexity. Disordered regions lie at residues 405–467 (RTPS…SLPS), 584–656 (PGQI…AAGC), and 728–815 (FATT…QPLR). 3 stretches are compositionally biased toward polar residues: residues 425–462 (PAST…TALQ), 588–608 (ASPQ…SSQG), and 616–630 (ELTT…STAT). Low complexity-rich tracts occupy residues 633–655 (GPST…SAAG) and 732–752 (PPSQ…HQQQ). Positions 753 to 786 (RYLQVQTPSSLHNEQTDSLLLSSYSPQQGNMGYH) are enriched in polar residues. Residues 787–815 (QTQQQQQQQQLPRRSNSLSESSNLPQPLR) show a composition bias toward low complexity.

In terms of assembly, component of the circadian clock oscillator which includes the CRY proteins, CLOCK or NPAS2, BMAL1 or BMAL2, CSNK1D and/or CSNK1E, TIMELESS and the PER proteins. Efficient DNA binding requires dimerization with another bHLH protein. Forms a heterodimer with BMAL1 and this heterodimerization is required for E-box-dependent transactivation. It depends on heme as a cofactor. In terms of tissue distribution, expressed in the retinal photoreceptor cells (at protein level). Expressed in the pineal gland and retina.

The protein resides in the nucleus. Its activity is regulated as follows. Carbon monoxide (CO) and the redox state of the cell can modulate the transcriptional activity of the NPAS2-BMAL1 heterodimer. NADH and NADPH enhance the DNA-binding activity of the heterodimer whereas CO binds the heme group in NPAS2 and inhibits the DNA-binding activity of the heterodimer. Functionally, transcriptional activator which forms a core component of the circadian clock. The circadian clock, an internal time-keeping system, regulates various physiological processes through the generation of approximately 24 hour circadian rhythms in gene expression, which are translated into rhythms in metabolism and behavior. It is derived from the Latin roots 'circa' (about) and 'diem' (day) and acts as an important regulator of a wide array of physiological functions including metabolism, sleep, body temperature, blood pressure, endocrine, immune, cardiovascular, and renal function. Consists of two major components: the central clock, residing in the suprachiasmatic nucleus (SCN) of the brain, and the peripheral clocks that are present in nearly every tissue and organ system. Both the central and peripheral clocks can be reset by environmental cues, also known as Zeitgebers (German for 'timegivers'). The predominant Zeitgeber for the central clock is light, which is sensed by retina and signals directly to the SCN. The central clock entrains the peripheral clocks through neuronal and hormonal signals, body temperature and feeding-related cues, aligning all clocks with the external light/dark cycle. Circadian rhythms allow an organism to achieve temporal homeostasis with its environment at the molecular level by regulating gene expression to create a peak of protein expression once every 24 hours to control when a particular physiological process is most active with respect to the solar day. Transcription and translation of core clock components (CLOCK, NPAS2, BMAL1, BMAL2, PER1, PER2, PER3, CRY1 and CRY2) plays a critical role in rhythm generation, whereas delays imposed by post-translational modifications (PTMs) are important for determining the period (tau) of the rhythms (tau refers to the period of a rhythm and is the length, in time, of one complete cycle). A diurnal rhythm is synchronized with the day/night cycle, while the ultradian and infradian rhythms have a period shorter and longer than 24 hours, respectively. Disruptions in the circadian rhythms contribute to the pathology of cardiovascular diseases, cancer, metabolic syndromes and aging. A transcription/translation feedback loop (TTFL) forms the core of the molecular circadian clock mechanism. Transcription factors, CLOCK or NPAS2 and BMAL1 or BMAL2, form the positive limb of the feedback loop, act in the form of a heterodimer and activate the transcription of core clock genes and clock-controlled genes (involved in key metabolic processes), harboring E-box elements (5'-CACGTG-3') within their promoters. The core clock genes: PER1/2/3 and CRY1/2 which are transcriptional repressors form the negative limb of the feedback loop and interact with the CLOCK|NPAS2-BMAL1|BMAL2 heterodimer inhibiting its activity and thereby negatively regulating their own expression. This heterodimer also activates nuclear receptors NR1D1/2 and RORA/B/G, which form a second feedback loop and which activate and repress BMAL1 transcription, respectively. NPAS2 positively regulates the circadian expression of AANAT in the retinal photoreceptor cells. This chain is Neuronal PAS domain-containing protein 2 (NPAS2), found in Gallus gallus (Chicken).